A 511-amino-acid chain; its full sequence is ATP synthase subunit alpha (511 aa).

Residue 169–176 coordinates ATP; it reads GDRQTGKT.

It belongs to the ATPase alpha/beta chains family. In terms of assembly, F-type ATPases have 2 components, CF(1) - the catalytic core - and CF(0) - the membrane proton channel. CF(1) has five subunits: alpha(3), beta(3), gamma(1), delta(1), epsilon(1). CF(0) has three main subunits: a(1), b(2) and c(9-12). The alpha and beta chains form an alternating ring which encloses part of the gamma chain. CF(1) is attached to CF(0) by a central stalk formed by the gamma and epsilon chains, while a peripheral stalk is formed by the delta and b chains.

It localises to the cell inner membrane. The enzyme catalyses ATP + H2O + 4 H(+)(in) = ADP + phosphate + 5 H(+)(out). Functionally, produces ATP from ADP in the presence of a proton gradient across the membrane. The alpha chain is a regulatory subunit. In Bartonella quintana (strain Toulouse) (Rochalimaea quintana), this protein is ATP synthase subunit alpha.